Reading from the N-terminus, the 279-residue chain is Movement protein (279 aa).

Residues 246-279 are disordered; the sequence is SESEELNVESPPAAIGSSSASRSEAFRPQVVNGL. Over residues 254-268 the composition is skewed to low complexity; that stretch reads ESPPAAIGSSSASRS.

This sequence belongs to the cucumovirus movement protein family.

The protein localises to the host cell junction. The protein resides in the host plasmodesma. Functionally, transports viral genome to neighboring plant cells directly through plasmosdesmata, without any budding. The movement protein allows efficient cell to cell propagation, by bypassing the host cell wall barrier. Acts by forming a tubular structure at the host plasmodesmata, enlarging it enough to allow free passage of virion capsids. The polypeptide is Movement protein (Cucumber mosaic virus (strain CS) (CMV)).